The sequence spans 210 residues: uncharacterized protein (210 aa).

This is an uncharacterized protein from Escherichia coli (strain K12).